A 164-amino-acid polypeptide reads, in one-letter code: Large ribosomal subunit protein uL15 (164 aa).

Disordered regions lie at residues 1–49 and 143–164; these read MTKL…SIAG and EKAGGKLTTTKPEAAQDASAEA. Over residues 22 to 36 the composition is skewed to gly residues; that stretch reads RGPGSGKGKTAGRGV.

Belongs to the universal ribosomal protein uL15 family. Part of the 50S ribosomal subunit.

Its function is as follows. Binds to the 23S rRNA. This is Large ribosomal subunit protein uL15 from Phenylobacterium zucineum (strain HLK1).